A 233-amino-acid chain; its full sequence is MTTLSCKVTSVEAITDTVYRVRLLPDSPFLFRAGQYLMVVMDERDKRPFSMASTPSEKEFIELHIGASELNLYAMAVMDRILDQKVINIDIPHGKAWFRKSSANPLLLIAGGTGFSYTRSILLTALEEQPKRHISMYWGGRESQHLYDLAELRLLTERYPNLKVIPVVEQSDNGWCGRTGTVLKAVLEDFGSLANYDIYIAGRFEMAKIARERFCSERDASADSMYGDAFEFI.

The FAD-binding FR-type domain occupies threonine 2–arginine 99. Residue glycine 111 to phenylalanine 115 coordinates pyridine.

It belongs to the Fre/LuxG FAD/NAD(P) flavoprotein oxidoreductase family.

Its function is as follows. Involved in bioluminescence. It is a good supplier of reduced flavin mononucleotide (FMNH2) to the bioluminescence reaction. Preferably uses riboflavin as an electron acceptor when NADPH is used as an electron donor. The chain is NAD(P)H-flavin reductase (fre) from Photorhabdus luminescens (Xenorhabdus luminescens).